Reading from the N-terminus, the 203-residue chain is Thymidylate kinase (203 aa).

Gly14 to Ser21 contributes to the ATP binding site.

It belongs to the thymidylate kinase family.

The catalysed reaction is dTMP + ATP = dTDP + ADP. In terms of biological role, phosphorylation of dTMP to form dTDP in both de novo and salvage pathways of dTTP synthesis. This is Thymidylate kinase from Rickettsia africae (strain ESF-5).